The chain runs to 501 residues: MEFRLPVLLSFLLFFLMLVRHWKRSKGQGKPPPGPKPLPILGNLHQLADGLPHYAVTKLCRKYGPVMKLKLGQLDAVVISSPEAAKEVLKTNEIKFAQRPEVYAVEIMSYDHSSIVFSPYGDYWREMRKISVLELLSNRRVTSFRSIREDEVWNLVQFISENEGCIVNLSERIFIMTNDIVSRAAFGNKCDDQHNFTALLEEILQIGAGFAIADLYPSLTFLRPLTGMKPALERIHKKMDKILEQIVTEHQIKRKAAAKNNTKFEEEDLVDTLLNYAEANKNEFHLTTDQVKAVTLDIFSAGSETSATSMEWAMSELLKNPRVMKKAQEEVRQACKGKSKIKETDIQNLEYLKLVIKETFRLHAPGPFTPREARETCEIGGYTIPAKAKILINLHAMGRDPTIWKDPECFRPERFEGSSIDFKGNHFELIPFGGGRRICPGISFATANIELGLAQMMYHFDYKLPNGKSLEDLDMNENFGMTCRRKENLQVIATTRIPFQK.

Residues Met-1–His-21 traverse the membrane as a helical segment. A heme-binding site is contributed by Cys-439.

This sequence belongs to the cytochrome P450 family. Heme is required as a cofactor. In terms of tissue distribution, mainly expressed in petioles and roots, and, to a lower extent, in leaves.

The protein resides in the membrane. The enzyme catalyses dihydroniloticin + 2 reduced [NADPH--hemoprotein reductase] + 2 O2 = melianol + 2 oxidized [NADPH--hemoprotein reductase] + 3 H2O + 2 H(+). It functions in the pathway secondary metabolite biosynthesis; terpenoid biosynthesis. Functionally, monooxygenase involved in the biosynthesis of limonoids triterpene natural products such as azadirachtin, an antifeedant widely used as bioinsecticide, and possessing many medicinal applications including anti-tumoral, anti-malarial, anti-rheumatic, antibacterial, anti-inflammatory, anti-pyretic and diuretic effects. Catalyzes the conversion of dihydroniloticin to the protolimonoid melianol. In Melia azedarach (Chinaberry tree), this protein is Melianol synthase CYP71BQ5.